Consider the following 310-residue polypeptide: MSSKLLTIQLLEELVHAAELNQEGKTADYIPELANVNQELTAIAVQPLGEKTLAYSNNPLHPVTLQSTGKMIPLIGLLEEFGADQLFEWVKVEPSGDDFASITRLEQFGPKPSNPMLNAGAIALCSRIPGVGEQQFRWLEHWVQKLFNQRLSINPLVFASEKRTGNRNRALAYLLKSRSNLGADVHETLDLYFALCSYEAMLDQMLYLPAVLANKGQDPDTGEQILSIETCKITLAIMATCGLYDETGTHMVKTGMPAKSGVSGYTIAVVPGKAGIVVLSPRVNAKGNSIRGEIMLEGLSKAMNWHFALP.

Substrate contacts are provided by Ser67, Asn118, Glu161, Asn168, Tyr192, Tyr244, and Val262.

It belongs to the glutaminase family. As to quaternary structure, homotetramer.

The catalysed reaction is L-glutamine + H2O = L-glutamate + NH4(+). The sequence is that of Glutaminase from Legionella pneumophila (strain Paris).